The primary structure comprises 1375 residues: DNA-directed RNA polymerase subunit beta' (1375 aa).

4 residues coordinate Zn(2+): Cys-70, Cys-72, Cys-85, and Cys-88. Residues Asp-461, Asp-463, and Asp-465 each coordinate Mg(2+). Zn(2+)-binding residues include Cys-797, Cys-871, Cys-878, and Cys-881.

It belongs to the RNA polymerase beta' chain family. As to quaternary structure, the RNAP catalytic core consists of 2 alpha, 1 beta, 1 beta' and 1 omega subunit. When a sigma factor is associated with the core the holoenzyme is formed, which can initiate transcription. It depends on Mg(2+) as a cofactor. Zn(2+) is required as a cofactor.

It carries out the reaction RNA(n) + a ribonucleoside 5'-triphosphate = RNA(n+1) + diphosphate. DNA-dependent RNA polymerase catalyzes the transcription of DNA into RNA using the four ribonucleoside triphosphates as substrates. The sequence is that of DNA-directed RNA polymerase subunit beta' from Neorickettsia sennetsu (strain ATCC VR-367 / Miyayama) (Ehrlichia sennetsu).